A 94-amino-acid chain; its full sequence is Co-chaperonin GroES (94 aa).

It belongs to the GroES chaperonin family. Heptamer of 7 subunits arranged in a ring. Interacts with the chaperonin GroEL.

The protein localises to the cytoplasm. Functionally, together with the chaperonin GroEL, plays an essential role in assisting protein folding. The GroEL-GroES system forms a nano-cage that allows encapsulation of the non-native substrate proteins and provides a physical environment optimized to promote and accelerate protein folding. GroES binds to the apical surface of the GroEL ring, thereby capping the opening of the GroEL channel. The chain is Co-chaperonin GroES from Finegoldia magna (strain ATCC 29328 / DSM 20472 / WAL 2508) (Peptostreptococcus magnus).